The chain runs to 166 residues: Large ribosomal subunit protein uL10 (166 aa).

Belongs to the universal ribosomal protein uL10 family. As to quaternary structure, part of the ribosomal stalk of the 50S ribosomal subunit. The N-terminus interacts with L11 and the large rRNA to form the base of the stalk. The C-terminus forms an elongated spine to which L12 dimers bind in a sequential fashion forming a multimeric L10(L12)X complex.

Functionally, forms part of the ribosomal stalk, playing a central role in the interaction of the ribosome with GTP-bound translation factors. This chain is Large ribosomal subunit protein uL10 (rplJ), found in Streptococcus pyogenes serotype M1.